Consider the following 341-residue polypeptide: D-erythrose-4-phosphate dehydrogenase (341 aa).

Residue 12-13 (RI) coordinates NAD(+). Residues 154-156 (SCT), R200, 213-214 (TK), and R236 each bind substrate. The active-site Nucleophile is C155. N318 serves as a coordination point for NAD(+).

The protein belongs to the glyceraldehyde-3-phosphate dehydrogenase family. Epd subfamily. In terms of assembly, homotetramer.

It localises to the cytoplasm. It catalyses the reaction D-erythrose 4-phosphate + NAD(+) + H2O = 4-phospho-D-erythronate + NADH + 2 H(+). It participates in cofactor biosynthesis; pyridoxine 5'-phosphate biosynthesis; pyridoxine 5'-phosphate from D-erythrose 4-phosphate: step 1/5. Catalyzes the NAD-dependent conversion of D-erythrose 4-phosphate to 4-phosphoerythronate. The sequence is that of D-erythrose-4-phosphate dehydrogenase from Edwardsiella ictaluri (strain 93-146).